A 299-amino-acid chain; its full sequence is MTLINRSKPFVLLVGFSIISSLLLWVSQASVVSSGDFNKDFFVTWSPTHVNTSNDGRSRTLKLDQESGASFSSIQTFLFGQIDMKIKLIRGSSQGTVVAYYMSSDQPNRDEIDFEFLGNVNGQPYILQTNVYAEGLDNREERIHLWFDPAKDFHTYSILWNIHQIVFMVDQIPIRLYRNHGEKGVAYPRLQPMSVQASLWNGESWATRGGHDKIDWSKGPFVASFGDYKIDACIWIGNTSFCNGESTENWWNKNEFSSLTRVQKRWFKWVRKYHLIYDYCQDYGRFNNKLPKECSLPKY.

A signal peptide spans 1-29 (MTLINRSKPFVLLVGFSIISSLLLWVSQA). One can recognise a GH16 domain in the interval 30–225 (SVVSSGDFNK…WSKGPFVASF (196 aa)). An N-linked (GlcNAc...) asparagine glycan is attached at Asn51. Glu111 functions as the Nucleophile in the catalytic mechanism. The active-site Proton donor is the Glu115. Residues Glu115, 128–130 (QTN), 138–140 (NRE), 204–205 (SW), and Gly209 each bind xyloglucan. 2 cysteine pairs are disulfide-bonded: Cys233–Cys242 and Cys280–Cys294. Asn238 carries an N-linked (GlcNAc...) asparagine glycan. Arg285 provides a ligand contact to xyloglucan.

This sequence belongs to the glycosyl hydrolase 16 family. XTH group 1 subfamily. Contains at least one intrachain disulfide bond essential for its enzymatic activity.

It is found in the secreted. It localises to the cell wall. The protein localises to the extracellular space. The protein resides in the apoplast. The catalysed reaction is breaks a beta-(1-&gt;4) bond in the backbone of a xyloglucan and transfers the xyloglucanyl segment on to O-4 of the non-reducing terminal glucose residue of an acceptor, which can be a xyloglucan or an oligosaccharide of xyloglucan.. In terms of biological role, catalyzes xyloglucan endohydrolysis (XEH) and/or endotransglycosylation (XET). Cleaves and religates xyloglucan polymers, an essential constituent of the primary cell wall, and thereby participates in cell wall construction of growing tissues. In Arabidopsis thaliana (Mouse-ear cress), this protein is Probable xyloglucan endotransglucosylase/hydrolase protein 10 (XTH10).